A 162-amino-acid chain; its full sequence is Protein cornichon homolog 2 (162 aa).

The Cytoplasmic segment spans residues 1 to 10 (MAFTFAAFCY). Residues 11–31 (MLTLVLCASLIFFIIWHIIAF) traverse the membrane as a helical segment. At 32-72 (DELRTDFKNPIEQGNPSRARERVKNVERICCLLRKLVVPEY) the chain is on the lumenal side. A helical membrane pass occupies residues 73 to 93 (CIHGLFCLMFMCAAEWVTLGL). The Cytoplasmic portion of the chain corresponds to 94 to 138 (NIPLLFYHLWRYFHRPADGSEVMFDPVSIMNVDILNYCQKEAWCK). A helical transmembrane segment spans residues 139–161 (LAFYLLSFFYYLYRVGATVRYVS). Residue A162 is a topological domain, lumenal.

It belongs to the cornichon family.

The protein resides in the membrane. In terms of biological role, regulates the trafficking and gating properties of AMPA-selective glutamate receptors (AMPARs). In Xenopus tropicalis (Western clawed frog), this protein is Protein cornichon homolog 2 (cnih2).